A 301-amino-acid chain; its full sequence is Probable 2-(5''-triphosphoribosyl)-3'-dephosphocoenzyme-A synthase (301 aa).

It belongs to the CitG/MdcB family.

It catalyses the reaction 3'-dephospho-CoA + ATP = 2'-(5''-triphospho-alpha-D-ribosyl)-3'-dephospho-CoA + adenine. The protein is Probable 2-(5''-triphosphoribosyl)-3'-dephosphocoenzyme-A synthase of Pectobacterium carotovorum subsp. carotovorum (strain PC1).